The following is a 512-amino-acid chain: MAEALASQLNKAKLGDNGAETKWKEQLKLPPKDTRTQTEDVTATKGLEFEDFYIKRELMMGIFEAGFEKPSPIQEETIPVALTGRDILARAKNGTGKTAAFVIPTLERTNPKISKTQALILVPTRELALQTSQVCKTLGKHLGINVMVTTGGTGLQDDIIRLSDTVHIIVGTPGRILDLASKGVADLSECTTFVMDEADKLLSPEFTPVIEQLLSFHPKDRQVMLFSATFPMIVKSFKDKHMRNPYEINLMDELTLRGITQYYAFVEERQKVHCLNTLFSKLQINQSIIFCNSTNRVELLAKKITELGYSCFYSHARMLQQNRNRVFHDFRNGVCRNLVCSDLLTRGIDIQAVNVVINFDFPKNAETYLHRIGRSGRFGHLGLAINLINWDDRYNLYKIEQELGTEIQPIPPSIDKKLYVYDTPETIPRPIANASTERNPPAQLAQSSDNQNHRQAHHISGGHGQQTANRGHSLRGSYRGGRAQGHRGGHPENNRTNPMSSRSNMPTSTTAS.

The interval 1 to 24 (MAEALASQLNKAKLGDNGAETKWK) is disordered. The short motif at 47–75 (LEFEDFYIKRELMMGIFEAGFEKPSPIQE) is the Q motif element. The Helicase ATP-binding domain maps to 78–248 (IPVALTGRDI…DKHMRNPYEI (171 aa)). 91–98 (AKNGTGKT) is an ATP binding site. Residues 196–199 (DEAD) carry the DEAD box motif. The 161-residue stretch at 258–418 (GITQYYAFVE…PIPPSIDKKL (161 aa)) folds into the Helicase C-terminal domain. A disordered region spans residues 429-512 (RPIANASTER…SNMPTSTTAS (84 aa)). Composition is skewed to polar residues over residues 433–450 (NAST…SSDN) and 494–512 (NRTN…TTAS).

Belongs to the DEAD box helicase family. DDX6/DHH1 subfamily.

It is found in the cytoplasm. The protein localises to the P-body. It catalyses the reaction ATP + H2O = ADP + phosphate + H(+). Its function is as follows. ATP-dependent RNA helicase involved in mRNA turnover, and more specifically in mRNA decapping. Is involved in G1/S DNA-damage checkpoint recovery, probably through the regulation of the translational status of a subset of mRNAs. May also have a role in translation and mRNA nuclear export. In Coccidioides immitis (strain RS) (Valley fever fungus), this protein is ATP-dependent RNA helicase DHH1 (DHH1).